Reading from the N-terminus, the 438-residue chain is Transmembrane protein 184C (438 aa).

A run of 7 helical transmembrane segments spans residues 17–37 (LVAV…VWEL), 48–68 (AWFI…WVIL), 86–106 (ILWM…YPGI), 179–199 (YTVV…LGIY), 212–232 (YLVI…LLFY), 254–274 (VVFV…VGVI), and 287–307 (AVAT…AAIA). The segment at 358–438 (PRKKLFPEDQ…KEPSDKSVDS (81 aa)) is disordered. Low complexity-rich tracts occupy residues 374 to 390 (SLLS…ASSM) and 404 to 413 (TVTPQTTPTT). Ser422 carries the phosphoserine modification. Over residues 425 to 438 (IGEKKEPSDKSVDS) the composition is skewed to basic and acidic residues.

This sequence belongs to the TMEM184 family.

The protein localises to the membrane. In terms of biological role, possible tumor suppressor which may play a role in cell growth. This Pongo abelii (Sumatran orangutan) protein is Transmembrane protein 184C (TMEM184C).